The chain runs to 601 residues: Elongation factor 4 (601 aa).

In terms of domain architecture, tr-type G spans 7 to 189 (RNIRNFSIIA…AIVHRIPPPA (183 aa)). GTP contacts are provided by residues 19–24 (DHGKST) and 136–139 (NKID).

Belongs to the TRAFAC class translation factor GTPase superfamily. Classic translation factor GTPase family. LepA subfamily.

It localises to the cell inner membrane. The enzyme catalyses GTP + H2O = GDP + phosphate + H(+). Its function is as follows. Required for accurate and efficient protein synthesis under certain stress conditions. May act as a fidelity factor of the translation reaction, by catalyzing a one-codon backward translocation of tRNAs on improperly translocated ribosomes. Back-translocation proceeds from a post-translocation (POST) complex to a pre-translocation (PRE) complex, thus giving elongation factor G a second chance to translocate the tRNAs correctly. Binds to ribosomes in a GTP-dependent manner. In Xanthomonas oryzae pv. oryzae (strain MAFF 311018), this protein is Elongation factor 4.